We begin with the raw amino-acid sequence, 558 residues long: AP2-like ethylene-responsive transcription factor AIL5 (558 aa).

Residues methionine 1–threonine 54 show a composition bias toward low complexity. 3 disordered regions span residues methionine 1 to leucine 65, serine 74 to valine 93, and histidine 166 to glutamate 195. 2 DNA-binding regions (AP2/ERF) span residues isoleucine 203 to proline 269 and methionine 305 to aspartate 363. The tract at residues serine 387–serine 406 is disordered.

Belongs to the AP2/ERF transcription factor family. AP2 subfamily. In terms of tissue distribution, expressed in roots, seedlings, inflorescence, and siliques. Also detected at low levels in leaves.

The protein localises to the nucleus. In terms of biological role, probably acts as a transcriptional activator. Binds to the GCC-box pathogenesis-related promoter element. May be involved in the regulation of gene expression by stress factors and by components of stress signal transduction pathways. Involved in the regulation of floral organs size. This chain is AP2-like ethylene-responsive transcription factor AIL5, found in Arabidopsis thaliana (Mouse-ear cress).